Consider the following 490-residue polypeptide: Dipeptide and tripeptide permease A (490 aa).

Topologically, residues 1-34 are cytoplasmic; sequence MSNANNNQPENVSLNAFKQPRAFYLIFSIELWER. The chain crosses the membrane as a helical span at residues 35 to 55; that stretch reads FGYYGLQGIMAVYLVKMLGMT. The Periplasmic segment spans residues 56–59; the sequence is EADS. A helical transmembrane segment spans residues 60-80; the sequence is ITLFSSFSALVYGFVAIGGWL. The Cytoplasmic segment spans residues 81-89; sequence GDKVLGAKR. Residues 90 to 110 form a helical membrane-spanning segment; that stretch reads VIMLGALVLAIGYAFVAYSGH. Aspartate 111 is a topological domain (periplasmic). A helical transmembrane segment spans residues 112 to 132; sequence LSLVYVGMATIAVGNGLFKAN. The Cytoplasmic portion of the chain corresponds to 133–153; the sequence is PSSLLSTCYEKNDPRLDGAFT. A helical transmembrane segment spans residues 154–174; that stretch reads MYYMSVNIGSFFSMLATPWLA. Residues 175-176 are Periplasmic-facing; that stretch reads AR. A helical transmembrane segment spans residues 177-197; that stretch reads FGWSVAFSLSVVGMLITLVNF. At 198–217 the chain is on the cytoplasmic side; it reads MMCRRWVKDQGSKPDFAPLQ. A helical transmembrane segment spans residues 218–238; that stretch reads VGKLMMTLVGVVILVAISTWL. Residues 239 to 246 lie on the Periplasmic side of the membrane; it reads LHNQTIAR. A helical transmembrane segment spans residues 247-267; sequence WALAIISAGIILIFAKETFAL. Residues 268–274 are Cytoplasmic-facing; the sequence is QGGARRK. Residues 275–295 traverse the membrane as a helical segment; sequence MIVAFLLMLEAVVFFVLYSQM. At 296–320 the chain is on the periplasmic side; the sequence is PTSLNFFAIHNVEHSIFGIAFEPEQ. Residues 321–341 form a helical membrane-spanning segment; sequence YQALNPFWIMVASPILAAIYN. Residues 342 to 352 lie on the Cytoplasmic side of the membrane; it reads KMGDRLPMPHK. Residues 353-373 traverse the membrane as a helical segment; the sequence is FAIGMVLCSGAFLVLPWGASF. Residues 374 to 383 are Periplasmic-facing; that stretch reads ANEAGIVSVN. Residues 384-404 form a helical membrane-spanning segment; the sequence is WLILSYALQSIGELMISGLGL. At 405-414 the chain is on the cytoplasmic side; that stretch reads AMVAQLVPQR. The helical transmembrane segment at 415–435 threads the bilayer; sequence LMGFIMGSWFLTTAAAALIAG. The Periplasmic segment spans residues 436–460; that stretch reads KVAALTAVPGGEVADPHASLAIYSH. A helical transmembrane segment spans residues 461–481; it reads VFMQIGLATAVIAVLMLLTAP. Over 482–490 the chain is Cytoplasmic; that stretch reads KLNRMTLGD.

This sequence belongs to the major facilitator superfamily. Proton-dependent oligopeptide transporter (POT/PTR) (TC 2.A.17) family. DtpA subfamily.

Its subcellular location is the cell inner membrane. Functionally, proton-dependent permease that transports di- and tripeptides. The polypeptide is Dipeptide and tripeptide permease A (Edwardsiella piscicida).